The chain runs to 533 residues: Large neutral amino acids transporter small subunit 2 (533 aa).

The interval 1 to 33 (MEKGTRQRNNTAKNHPDRGSDTSPEAEASSGGG) is disordered. At 1 to 45 (MEKGTRQRNNTAKNHPDRGSDTSPEAEASSGGGGVALKKEIGLVS) the chain is on the cytoplasmic side. Phosphoserine occurs at positions 20, 23, 29, and 30. The chain crosses the membrane as a helical span at residues 46–66 (ACGIIVGNIIGSGIFVSPKGV). Residue Ile-54 coordinates L-leucine. The Extracellular portion of the chain corresponds to 67 to 74 (LENAGSVG). A helical transmembrane segment spans residues 75 to 96 (LALIVWIVTGVITAVGALCYAE). The Cytoplasmic portion of the chain corresponds to 97–117 (LGVTIPKSGGDYSYVKDIFGG). The helical transmembrane segment at 118–150 (LAGFLRLWIAVLVIYPTNQAVIALTFSNYVLQP) threads the bilayer. L-tryptophan is bound at residue Asn-135. The Extracellular portion of the chain corresponds to 151 to 158 (LFPTCFPP). Residues 159-179 (ESGLRLLAAICLLLLTWVNCS) form a helical membrane-spanning segment. The Cytoplasmic portion of the chain corresponds to 180 to 182 (SVR). A helical transmembrane segment spans residues 183 to 211 (WATRVQDIFTAGKLLALALIIIMGVVQIC). Over 212–231 (KGEFFWLEPKNAFENFQEPD) the chain is Extracellular. Residues 232 to 253 (IGLVALAFLQGSFAYGGWNFLN) form a helical membrane-spanning segment. Gly-247 contributes to the L-leucine binding site. Over 254 to 266 (YVTEELVDPYKNL) the chain is Cytoplasmic. A helical transmembrane segment spans residues 267 to 288 (PRAIFISIPLVTFVYVFANIAY). The Extracellular segment spans residues 289–313 (VTAMSPQELLASNAVAVTFGEKLLG). Residues 314-339 (VMAWIMPISVALSTFGGVNGSLFTSS) traverse the membrane as a helical segment. Residues 340–365 (RLFFAGAREGHLPSVLAMIHVKRCTP) are Cytoplasmic-facing. The helical transmembrane segment at 366–383 (IPALLFTCLSTLLMLVTS) threads the bilayer. The Extracellular segment spans residues 384 to 387 (DMYT). Residues 388–409 (LINYVGFINYLFYGVTVAGQIV) form a helical membrane-spanning segment. Position 396 (Asn-396) interacts with L-tryptophan. The Cytoplasmic segment spans residues 410–424 (LRWKKPDIPRPIKIS). The next 2 membrane-spanning stretches (helical) occupy residues 425 to 447 (LLFP…WSEP) and 448 to 467 (VVCG…YFLG). The Cytoplasmic segment spans residues 468–533 (VYWQHKPKCF…VKDPDSEEQP (66 aa)). The segment at 500–533 (GDSGTEETIDDVEEQHKPIFQPTPVKDPDSEEQP) is disordered. Residues 502-512 (SGTEETIDDVE) are compositionally biased toward acidic residues. Position 529 is a phosphoserine (Ser-529).

This sequence belongs to the amino acid-polyamine-organocation (APC) superfamily. L-type amino acid transporter (LAT) (TC 2.A.3.8) family. In terms of assembly, disulfide-linked heterodimer composed of the catalytic light chain subunit SLC7A8 and the heavy chain subunit SLC3A2. SLC3A2 acts as a chaperone for correct plasma membrane trafficking and stabilization of SLC7A8 and modulates the substrate affinity and specificity of SLC7A8. ICAM-1 associates with the heterodimer SLC3A2/SLC7A8; facilitates leucine uptake. As to expression, expression is seen in jejunum mucosa and the epithelial cells of the jejunum, ileum and colon, as well as in kidney, placenta, brain, testis and skeletal muscle. Expressed in retina, inner blood-retinal barrier of retina, retinal vascular endothelial cells. Also expressed in the intestinal epithelial cell line IEC-6 and in the retinal capillary endothelial cell line TR-iBRB2.

It is found in the cell membrane. Its subcellular location is the basolateral cell membrane. The catalysed reaction is L-dopa(out) + L-phenylalanine(in) = L-dopa(in) + L-phenylalanine(out). It catalyses the reaction 3,3'-diiodo-L-thyronine(out) = 3,3'-diiodo-L-thyronine(in). The enzyme catalyses L-histidine(in) + L-phenylalanine(out) = L-histidine(out) + L-phenylalanine(in). It carries out the reaction L-tryptophan(in) + L-phenylalanine(out) = L-tryptophan(out) + L-phenylalanine(in). The catalysed reaction is L-isoleucine(in) + L-phenylalanine(out) = L-isoleucine(out) + L-phenylalanine(in). It catalyses the reaction L-valine(in) + L-phenylalanine(out) = L-valine(out) + L-phenylalanine(in). The enzyme catalyses L-leucine(in) + L-phenylalanine(out) = L-leucine(out) + L-phenylalanine(in). It carries out the reaction L-glutamine(in) + L-phenylalanine(out) = L-glutamine(out) + L-phenylalanine(in). The catalysed reaction is L-cysteine(in) + L-phenylalanine(out) = L-cysteine(out) + L-phenylalanine(in). It catalyses the reaction L-phenylalanine(out) + L-methionine(in) = L-phenylalanine(in) + L-methionine(out). The enzyme catalyses L-leucine(out) + L-methionine(in) = L-leucine(in) + L-methionine(out). It carries out the reaction L-cysteine(out) + L-methionine(in) = L-cysteine(in) + L-methionine(out). The catalysed reaction is S-methylmercury-L-cysteine(out) + L-methionine(in) = S-methylmercury-L-cysteine(in) + L-methionine(out). It catalyses the reaction S-methylmercury-L-cysteine(in) + L-leucine(out) = S-methylmercury-L-cysteine(out) + L-leucine(in). The enzyme catalyses S-methylmercury-L-cysteine(in) + L-phenylalanine(out) = S-methylmercury-L-cysteine(out) + L-phenylalanine(in). It carries out the reaction L-phenylalanine(out) + L-serine(in) = L-phenylalanine(in) + L-serine(out). The catalysed reaction is L-phenylalanine(out) + glycine(in) = L-phenylalanine(in) + glycine(out). It catalyses the reaction L-phenylalanine(out) + L-alanine(in) = L-phenylalanine(in) + L-alanine(out). The enzyme catalyses 3,3',5-triiodo-L-thyronine(out) = 3,3',5-triiodo-L-thyronine(in). With respect to regulation, leucine transport activity is inhibited by 2-amino-bicyclo-(2,2,1)-heptane-2-carboxylate (BCH), glycine, L-isomers of the neutral amino acids and histidine. Associates with SLC3A2 to form a functional heterodimeric complex that translocates small and large neutral amino acids with broad specificity and a stoichiometry of 1:1. Functions as amino acid antiporter mediating the influx of extracellular essential amino acids mainly in exchange with the efflux of highly concentrated intracellular amino acids. Has relatively symmetrical selectivities but strongly asymmetrical substrate affinities at both the intracellular and extracellular sides of the transporter. This asymmetry allows SLC7A8 to regulate intracellular amino acid pools (mM concentrations) by exchange with external amino acids (uM concentration range), equilibrating the relative concentrations of different amino acids across the plasma membrane instead of mediating their net uptake. May play an essential role in the reabsorption of neutral amino acids from the epithelial cells to the bloodstream in the kidney. Involved in the uptake of methylmercury (MeHg) when administered as the L-cysteine or D,L-homocysteine complexes, and hence plays a role in metal ion homeostasis and toxicity. Involved in the cellular activity of small molecular weight nitrosothiols, via the stereoselective transport of L-nitrosocysteine (L-CNSO) across the transmembrane. Imports the thyroid hormone diiodothyronine (T2) and to a smaller extent triiodothyronine (T3) but not rT 3 or thyroxine (T4). Mediates the uptake of L-DOPA. May participate in auditory function. This Rattus norvegicus (Rat) protein is Large neutral amino acids transporter small subunit 2 (Slc7a8).